The chain runs to 281 residues: 4-deoxy-L-threo-5-hexosulose-uronate ketol-isomerase (281 aa).

Zn(2+) is bound by residues histidine 198, histidine 200, glutamate 205, and histidine 248.

This sequence belongs to the KduI family. The cofactor is Zn(2+).

It catalyses the reaction 5-dehydro-4-deoxy-D-glucuronate = 3-deoxy-D-glycero-2,5-hexodiulosonate. It functions in the pathway glycan metabolism; pectin degradation; 2-dehydro-3-deoxy-D-gluconate from pectin: step 4/5. Catalyzes the isomerization of 5-dehydro-4-deoxy-D-glucuronate to 3-deoxy-D-glycero-2,5-hexodiulosonate. This chain is 4-deoxy-L-threo-5-hexosulose-uronate ketol-isomerase, found in Lacticaseibacillus paracasei (strain ATCC 334 / BCRC 17002 / CCUG 31169 / CIP 107868 / KCTC 3260 / NRRL B-441) (Lactobacillus paracasei).